The following is a 160-amino-acid chain: Cytochrome b6-f complex subunit 4 (160 aa).

3 consecutive transmembrane segments (helical) span residues 36–56 (ILFT…GLAI), 95–115 (LLGI…PFIE), and 131–151 (AVFL…CFPI).

It belongs to the cytochrome b family. PetD subfamily. As to quaternary structure, the 4 large subunits of the cytochrome b6-f complex are cytochrome b6, subunit IV (17 kDa polypeptide, PetD), cytochrome f and the Rieske protein, while the 4 small subunits are PetG, PetL, PetM and PetN. The complex functions as a dimer.

It localises to the cellular thylakoid membrane. Its function is as follows. Component of the cytochrome b6-f complex, which mediates electron transfer between photosystem II (PSII) and photosystem I (PSI), cyclic electron flow around PSI, and state transitions. The sequence is that of Cytochrome b6-f complex subunit 4 from Picosynechococcus sp. (strain ATCC 27264 / PCC 7002 / PR-6) (Agmenellum quadruplicatum).